A 499-amino-acid chain; its full sequence is Glycerol kinase (499 aa).

ADP is bound at residue threonine 13. The ATP site is built by threonine 13, threonine 14, and serine 15. A sn-glycerol 3-phosphate-binding site is contributed by threonine 13. An ADP-binding site is contributed by arginine 17. 4 residues coordinate sn-glycerol 3-phosphate: arginine 83, glutamate 84, tyrosine 135, and aspartate 245. Glycerol-binding residues include arginine 83, glutamate 84, tyrosine 135, aspartate 245, and glutamine 246. ADP contacts are provided by threonine 267 and glycine 310. The ATP site is built by threonine 267, glycine 310, glutamine 314, and glycine 411. ADP-binding residues include glycine 411 and asparagine 415.

The protein belongs to the FGGY kinase family.

It catalyses the reaction glycerol + ATP = sn-glycerol 3-phosphate + ADP + H(+). Its pathway is polyol metabolism; glycerol degradation via glycerol kinase pathway; sn-glycerol 3-phosphate from glycerol: step 1/1. Inhibited by fructose 1,6-bisphosphate (FBP). Its function is as follows. Key enzyme in the regulation of glycerol uptake and metabolism. Catalyzes the phosphorylation of glycerol to yield sn-glycerol 3-phosphate. This is Glycerol kinase from Xanthomonas euvesicatoria pv. vesicatoria (strain 85-10) (Xanthomonas campestris pv. vesicatoria).